The primary structure comprises 197 residues: Pinin homolog 1 (197 aa).

Residues 30–73 (LDGKVNNEDSHMEIDQPEGSMEEDDHRQVKEKNTSENSVEQKRG) form a disordered region. 2 stretches are compositionally biased toward basic and acidic residues: residues 34–43 (VNNEDSHMEI) and 53–71 (DDHRQVKEKNTSENSVEQK).

The protein belongs to the pinin family.

The protein resides in the nucleus. It is found in the cytoplasm. Its function is as follows. Transcriptional activator that may participate in the regulation of mRNA splicing. This is Pinin homolog 1 (pnn1) from Schizosaccharomyces pombe (strain 972 / ATCC 24843) (Fission yeast).